The chain runs to 169 residues: 3-hydroxyacyl-[acyl-carrier-protein] dehydratase FabZ (169 aa).

Residue His-66 is part of the active site.

The protein belongs to the thioester dehydratase family. FabZ subfamily.

Its subcellular location is the cytoplasm. It carries out the reaction a (3R)-hydroxyacyl-[ACP] = a (2E)-enoyl-[ACP] + H2O. Functionally, involved in unsaturated fatty acids biosynthesis. Catalyzes the dehydration of short chain beta-hydroxyacyl-ACPs and long chain saturated and unsaturated beta-hydroxyacyl-ACPs. This chain is 3-hydroxyacyl-[acyl-carrier-protein] dehydratase FabZ, found in Helicobacter hepaticus (strain ATCC 51449 / 3B1).